The sequence spans 251 residues: Demethylmenaquinone methyltransferase (251 aa).

S-adenosyl-L-methionine contacts are provided by residues Thr66, Asp87, and 115-116 (NA).

It belongs to the class I-like SAM-binding methyltransferase superfamily. MenG/UbiE family.

It carries out the reaction a 2-demethylmenaquinol + S-adenosyl-L-methionine = a menaquinol + S-adenosyl-L-homocysteine + H(+). It participates in quinol/quinone metabolism; menaquinone biosynthesis; menaquinol from 1,4-dihydroxy-2-naphthoate: step 2/2. Functionally, methyltransferase required for the conversion of demethylmenaquinol (DMKH2) to menaquinol (MKH2). This chain is Demethylmenaquinone methyltransferase, found in Symbiobacterium thermophilum (strain DSM 24528 / JCM 14929 / IAM 14863 / T).